A 476-amino-acid polypeptide reads, in one-letter code: PRAME family member 5 (476 aa).

One copy of the LRR 1; degenerate repeat lies at arginine 97–cysteine 124. The LRR 2; degenerate repeat unit spans residues histidine 179 to asparagine 203. The LRR 3; degenerate repeat unit spans residues leucine 204 to histidine 230. The LRR 4; degenerate repeat unit spans residues methionine 231–lysine 266. LRR repeat units follow at residues leucine 267–leucine 292, lysine 293–lysine 324, threonine 325–leucine 345, alanine 349–arginine 376, and cysteine 377–histidine 401.

This sequence belongs to the PRAME family.

The polypeptide is PRAME family member 5 (Homo sapiens (Human)).